Consider the following 326-residue polypeptide: Undecaprenyl-phosphate 4-deoxy-4-formamido-L-arabinose transferase (326 aa).

2 helical membrane passes run 234-254 and 269-289; these read LLSI…ILLI and VFTL…GMGL.

It belongs to the glycosyltransferase 2 family.

The protein resides in the cell inner membrane. The enzyme catalyses UDP-4-deoxy-4-formamido-beta-L-arabinose + di-trans,octa-cis-undecaprenyl phosphate = 4-deoxy-4-formamido-alpha-L-arabinopyranosyl di-trans,octa-cis-undecaprenyl phosphate + UDP. Its pathway is glycolipid biosynthesis; 4-amino-4-deoxy-alpha-L-arabinose undecaprenyl phosphate biosynthesis; 4-amino-4-deoxy-alpha-L-arabinose undecaprenyl phosphate from UDP-4-deoxy-4-formamido-beta-L-arabinose and undecaprenyl phosphate: step 1/2. It functions in the pathway bacterial outer membrane biogenesis; lipopolysaccharide biosynthesis. Functionally, catalyzes the transfer of 4-deoxy-4-formamido-L-arabinose from UDP to undecaprenyl phosphate. The modified arabinose is attached to lipid A and is required for resistance to polymyxin and cationic antimicrobial peptides. The sequence is that of Undecaprenyl-phosphate 4-deoxy-4-formamido-L-arabinose transferase from Aeromonas hydrophila subsp. hydrophila (strain ATCC 7966 / DSM 30187 / BCRC 13018 / CCUG 14551 / JCM 1027 / KCTC 2358 / NCIMB 9240 / NCTC 8049).